The sequence spans 317 residues: Ceramide reductase (317 aa).

An N-terminal signal peptide occupies residues 1–27 (MATDARGVVAITGATGFLGRHLVRALA).

It belongs to the NAD(P)-dependent epimerase/dehydratase family.

It localises to the periplasm. The enzyme catalyses N-acyl-3-oxosphinganine + NADH + H(+) = an N-acylsphinganine + NAD(+). Its pathway is lipid metabolism; sphingolipid metabolism. Functionally, involved in de novo bacterial ceramide synthesis. Catalyzes the reduction of bacterial oxidized ceramides to bacterial dihydroceramides. The protein is Ceramide reductase of Caulobacter vibrioides (strain NA1000 / CB15N) (Caulobacter crescentus).